Reading from the N-terminus, the 430-residue chain is T-kininogen 1 (430 aa).

A signal peptide spans 1-18 (MKLITILLLCSRLLPSLA). The residue at position 19 (Gln-19) is a Pyrrolidone carboxylic acid. The Cystatin kininogen-type 1 domain maps to 28-131 (CNDETVFQAV…TQICNITPGK (104 aa)). Cystine bridges form between Cys-28–Cys-404, Cys-83–Cys-94, Cys-107–Cys-125, Cys-141–Cys-144, Cys-205–Cys-217, Cys-228–Cys-247, Cys-263–Cys-266, Cys-327–Cys-339, and Cys-350–Cys-369. N-linked (GlcNAc...) asparagine glycosylation occurs at Asn-82. Residues 150-253 (MDSSDLKPVL…SQSCDLYPGD (104 aa)) enclose the Cystatin kininogen-type 2 domain. N-linked (GlcNAc...) asparagine glycans are attached at residues Asn-168 and Asn-204. The Cystatin kininogen-type 3 domain maps to 272–375 (VDSPELKEAL…TVRCQALDMM (104 aa)). The N-linked (GlcNAc...) asparagine glycan is linked to Asn-326. The tract at residues 411–430 (SKARAGPAPDHQAEASTVTP) is disordered.

Post-translationally, as T-kinin is preceded by a Met instead of an Arg or Lys, it is not released from its precursor by either tissue or plasma kallikrein. As to expression, plasma.

The protein resides in the secreted. The protein localises to the extracellular space. Its function is as follows. Kininogens are plasma glycoproteins with a number of functions: (1) as precursor of the active peptide bradykinin they effect smooth muscle contraction, induction of hypotension and increase of vascular permeability. (2) They play a role in blood coagulation by helping to position optimally prekallikrein and factor XI next to factor XII. (3) They are inhibitor of thiol proteases. The chain is T-kininogen 1 (Map1) from Rattus norvegicus (Rat).